Consider the following 72-residue polypeptide: Hypotensin (72 aa).

The signal sequence occupies residues 1–24 (MKMMIAVFVSILLLMFSLSSTAMG). Propeptides lie at residues 25-35 (METEQQNMEER) and 61-72 (RFDPATFGENED).

The protein belongs to the non-disulfide-bridged peptide (NDBP) superfamily. As to expression, expressed by the venom gland.

The protein resides in the secreted. Potentiates the hypotensive action of bradykinin (BK) in normotensive rats, and induces a vasorelaxant effect in mesenteric artery rings that is induced by endothelium-dependent release of nitric oxide (NO). Does not inhibit angiotensin converting enzyme (ACE). Shows neither hemolytic activity nor cytotoxicity to normal and cancer cells. Shows moderate antimicrobial activity against the fungi Candida albicans and the filamentous fungus Trichophyton rubrum, as well as against the bacteria C.albicans (MIC=128 ug/mL), C.tropicalis (MIC=128 ug/mL) and Aspergillus flavus (MIC=128 ug/mL). Has no antimicrobial activity against S.aureus, S.epidermidis and P.aeruginosa. The polypeptide is Hypotensin (Tityus stigmurus (Brazilian scorpion)).